Consider the following 445-residue polypeptide: 3-phosphoshikimate 1-carboxyvinyltransferase (445 aa).

Residues lysine 28, serine 29, and arginine 33 each coordinate 3-phosphoshikimate. Lysine 28 lines the phosphoenolpyruvate pocket. Residues glycine 101 and arginine 129 each contribute to the phosphoenolpyruvate site. The 3-phosphoshikimate site is built by serine 175, glutamine 177, aspartate 328, and lysine 355. Glutamine 177 contributes to the phosphoenolpyruvate binding site. Aspartate 328 serves as the catalytic Proton acceptor. Phosphoenolpyruvate-binding residues include arginine 359 and arginine 402.

Belongs to the EPSP synthase family. Monomer.

Its subcellular location is the cytoplasm. The catalysed reaction is 3-phosphoshikimate + phosphoenolpyruvate = 5-O-(1-carboxyvinyl)-3-phosphoshikimate + phosphate. Its pathway is metabolic intermediate biosynthesis; chorismate biosynthesis; chorismate from D-erythrose 4-phosphate and phosphoenolpyruvate: step 6/7. Its function is as follows. Catalyzes the transfer of the enolpyruvyl moiety of phosphoenolpyruvate (PEP) to the 5-hydroxyl of shikimate-3-phosphate (S3P) to produce enolpyruvyl shikimate-3-phosphate and inorganic phosphate. The polypeptide is 3-phosphoshikimate 1-carboxyvinyltransferase (Rhodopseudomonas palustris (strain BisA53)).